The chain runs to 57 residues: Potassium channel toxin alpha-KTx 8.2 (57 aa).

An N-terminal signal peptide occupies residues 1-28 (MSRLYAIILIALVFNVVMTITPDMKVEA). 3 disulfides stabilise this stretch: C31-C47, C34-C52, and C38-C54.

The protein belongs to the short scorpion toxin superfamily. Potassium channel inhibitor family. Alpha-KTx 08 subfamily. In terms of tissue distribution, expressed by the venom gland.

It is found in the secreted. Its function is as follows. This toxin inhibits rKv1.1/KCNA1 (100% inhibition at 3 uM), Kv1.3/KCNA3 (human, mouse and rat) (IC(50)=269-467 nM), shaker IR (60% at 3 uM) and activates the mouse capsaicin receptor TRPV1 (EC(50)=132 uM, at 20 degrees Celsius), a non-selective cation channel expressed by sensory neurons of the pain pathway. In vivo, intraplantar injection of this toxin in WT mice hind paw shows significant acute pain, whereas no pain is observed when the toxin is injected into TRPV1 KO mice. In addition, subcutaneous injection into mice (185 mg) produces an excitation of the animal, but no lethality, whereas injection into cockroaches does not provoke lethality as well. The protein is Potassium channel toxin alpha-KTx 8.2 of Olivierus martensii (Manchurian scorpion).